The following is a 101-amino-acid chain: Large ribosomal subunit protein bL21 (101 aa).

The protein belongs to the bacterial ribosomal protein bL21 family. As to quaternary structure, part of the 50S ribosomal subunit. Contacts protein L20.

This protein binds to 23S rRNA in the presence of protein L20. The sequence is that of Large ribosomal subunit protein bL21 from Magnetococcus marinus (strain ATCC BAA-1437 / JCM 17883 / MC-1).